The chain runs to 200 residues: High mobility group protein 1 homolog (200 aa).

2 consecutive DNA-binding regions (HMG box) follow at residues 11–81 (PRGR…QSYK) and 100–168 (PKRN…AEYK). Over residues 64 to 86 (EKSMRDKVRYDREMQSYKPPKGE) the composition is skewed to basic and acidic residues. Disordered stretches follow at residues 64–103 (EKSMRDKVRYDREMQSYKPPKGEKNKRRRRRKDPDAPKRN) and 169–200 (AKAKPMKRQVKESSSSSSSDSSSDDSSSDDSD). A compositionally biased stretch (acidic residues) spans 190-200 (SSDDSSSDDSD).

It belongs to the HMGB family.

Its subcellular location is the nucleus. The protein localises to the chromosome. Its function is as follows. Binds preferentially single-stranded DNA and unwinds double-stranded DNA. In Strongylocentrotus purpuratus (Purple sea urchin), this protein is High mobility group protein 1 homolog (HMG1).